Reading from the N-terminus, the 416-residue chain is Orexin/Hypocretin receptor type 1 (416 aa).

The interval 1–22 (MEPSATPGAQPGVPTSSGEPFH) is disordered. Topologically, residues 1–46 (MEPSATPGAQPGVPTSSGEPFHLPPDYEDEFLRYLWRDYLYPKQYE) are extracellular. The segment at 26–41 (DYEDEFLRYLWRDYLY) is required for response to orexin-A. A helical membrane pass occupies residues 47-67 (WVLIAAYVAVFLIALVGNTLV). The Cytoplasmic portion of the chain corresponds to 68-82 (CLAVWRNHHMRTVTN). A helical membrane pass occupies residues 83 to 105 (YFIVNLSLADVLVTAICLPASLL). Residues 106 to 119 (VDITESWLFGQALC) are Extracellular-facing. Cysteines 119 and 202 form a disulfide. Residues 120 to 140 (KVIPYLQAVSVSVAVLTLSFI) form a helical membrane-spanning segment. Residues 141 to 160 (ALDRWYAICHPLLFKSTARR) lie on the Cytoplasmic side of the membrane. A helical membrane pass occupies residues 161–182 (ARGSILGIWAVSLAVMVPQAAV). Residues 183–213 (MECSSVLPELANRTRLFSVCDEHWADELYPK) lie on the Extracellular side of the membrane. An N-linked (GlcNAc...) asparagine glycan is attached at Asn-194. A helical membrane pass occupies residues 214 to 235 (IYHSCFFIVTYLAPLGLMAMAY). Topologically, residues 236–298 (FQIFRKLWGR…QMRARRKTAK (63 aa)) are cytoplasmic. Residues 299–321 (MLMVVLLVFALCYLPISVLNVLK) form a helical membrane-spanning segment. The Extracellular segment spans residues 322–336 (RVFGMFRQASDREAV). Residues 337–360 (YACFTFSHWLVYANSAANPIIYNF) traverse the membrane as a helical segment. Over 361 to 416 (LSGKFREQFKAAFSCCLPGLGPGSSARHKSLSLQSRCSVSKVSEHVVLTTVTTVLS) the chain is Cytoplasmic.

Belongs to the G-protein coupled receptor 1 family. Widely expressed.

The protein resides in the cell membrane. Moderately selective excitatory receptor for orexin-A and, with a lower affinity, for orexin-B neuropeptide. Triggers an increase in cytoplasmic Ca(2+) levels in response to orexin-A binding. In Mus musculus (Mouse), this protein is Orexin/Hypocretin receptor type 1.